Consider the following 202-residue polypeptide: Regulator of G-protein signaling 16 (202 aa).

2 S-palmitoyl cysteine lipidation sites follow: Cys-2 and Cys-12. In terms of domain architecture, RGS spans 65–181; it reads SFDLLLSSKN…LKSPAYRDLA (117 aa). A Phosphotyrosine; by EGFR modification is found at Tyr-168. At Tyr-177 the chain carries Phosphotyrosine.

In terms of assembly, interacts with GNAI1 and GNAQ. Interacts with GNAI2, GNAI3 and GNAO1. Palmitoylated on Cys-2 and/or Cys-12. Post-translationally, phosphorylated. Phosphorylation at Tyr-168 by EGFR enhances GTPase accelerating (GAP) activity toward GNAI1. Abundantly expressed in retina with lower levels of expression in most other tissues.

Its subcellular location is the membrane. In terms of biological role, regulates G protein-coupled receptor signaling cascades. Inhibits signal transduction by increasing the GTPase activity of G protein alpha subunits, thereby driving them into their inactive GDP-bound form. Plays an important role in the phototransduction cascade by regulating the lifetime and effective concentration of activated transducin alpha. May regulate extra and intracellular mitogenic signals. The chain is Regulator of G-protein signaling 16 (RGS16) from Homo sapiens (Human).